A 64-amino-acid chain; its full sequence is MAAVCDICGKGPGFGKSVSHSHRRTSRRWDPNIQTVHAVTRPGGNKKRLNVCTSCIKAGKITRG.

It belongs to the bacterial ribosomal protein bL28 family.

This chain is Large ribosomal subunit protein bL28C, found in Mycobacterium tuberculosis (strain ATCC 25618 / H37Rv).